The chain runs to 82 residues: Protein transport protein Sec61 subunit beta (82 aa).

Met-1 is modified (N-acetylmethionine). The disordered stretch occupies residues 1–34 (MVGSGAPQRGSAAATASMRRRKPTSGAGGGGASG). Topologically, residues 1-55 (MVGSGAPQRGSAAATASMRRRKPTSGAGGGGASGGAAGSMLQFYTDDAPGLKISP) are cytoplasmic. A helical membrane pass occupies residues 56-76 (NVVLIMSIGFIAFVAVLHVMG).

The protein belongs to the SEC61-beta family. Heterotrimeric complex composed of SEC61-alpha, SEC61-beta and SEC61-gamma.

Its subcellular location is the endoplasmic reticulum membrane. Necessary for protein translocation in the endoplasmic reticulum. This Arabidopsis thaliana (Mouse-ear cress) protein is Protein transport protein Sec61 subunit beta.